Reading from the N-terminus, the 61-residue chain is Cecropin-D (61 aa).

The first 22 residues, 1 to 22 (MKFSKIFVFVFAIVFATASVSA), serve as a signal peptide directing secretion. A propeptide spans 23–24 (AP) (removed by a dipeptidylpeptidase). Gln-60 bears the Glutamine amide mark.

The protein belongs to the cecropin family. In terms of tissue distribution, mainly in fat body. Lower in hemocytes. Not expressed in midguts, malpighian tubules and silk glands.

The protein resides in the secreted. Its function is as follows. Cecropins have lytic and antibacterial activity against several Gram-positive and Gram-negative bacteria. This chain is Cecropin-D (CECD), found in Bombyx mori (Silk moth).